The primary structure comprises 232 residues: Ribosomal RNA small subunit methyltransferase G (232 aa).

The disordered stretch occupies residues 1–24; the sequence is MVDTALHPIPGRRTPPHPRSTLPL. S-adenosyl-L-methionine contacts are provided by residues G91, L96, 142–143, and R160; that span reads AE.

The protein belongs to the methyltransferase superfamily. RNA methyltransferase RsmG family.

It localises to the cytoplasm. Its function is as follows. Specifically methylates the N7 position of guanine in position 518 of 16S rRNA. The chain is Ribosomal RNA small subunit methyltransferase G from Corynebacterium efficiens (strain DSM 44549 / YS-314 / AJ 12310 / JCM 11189 / NBRC 100395).